We begin with the raw amino-acid sequence, 211 residues long: Large ribosomal subunit protein uL4 (211 aa).

Disordered regions lie at residues 1 to 28 and 48 to 99; these read MAQA…ETEP and TAST…GPRY. Basic and acidic residues predominate over residues 10-28; that stretch reads RTGRRSEMELKGPRFETEP.

The protein belongs to the universal ribosomal protein uL4 family. As to quaternary structure, part of the 50S ribosomal subunit.

One of the primary rRNA binding proteins, this protein initially binds near the 5'-end of the 23S rRNA. It is important during the early stages of 50S assembly. It makes multiple contacts with different domains of the 23S rRNA in the assembled 50S subunit and ribosome. Its function is as follows. Forms part of the polypeptide exit tunnel. The polypeptide is Large ribosomal subunit protein uL4 (Rubrobacter xylanophilus (strain DSM 9941 / JCM 11954 / NBRC 16129 / PRD-1)).